The sequence spans 264 residues: Glutamate racemase (264 aa).

Substrate contacts are provided by residues 10 to 11 and 42 to 43; these read DS and YG. Cys73 functions as the Proton donor/acceptor in the catalytic mechanism. 74-75 contributes to the substrate binding site; it reads NT. The active-site Proton donor/acceptor is the Cys183. Substrate is bound at residue 184–185; that stretch reads TH.

This sequence belongs to the aspartate/glutamate racemases family.

It catalyses the reaction L-glutamate = D-glutamate. The protein operates within cell wall biogenesis; peptidoglycan biosynthesis. Functionally, provides the (R)-glutamate required for cell wall biosynthesis. This Streptococcus agalactiae serotype III (strain NEM316) protein is Glutamate racemase.